A 431-amino-acid chain; its full sequence is Septin-11 (431 aa).

The residue at position 2 (alanine 2) is an N-acetylalanine. A Phosphoserine modification is found at serine 9. The Septin-type G domain occupies 38–304 (QGFCFNILCV…ELYRRCKLEE (267 aa)). Residues 48 to 55 (GETGIGKS) form a G1 motif region. Residues 48–55 (GETGIGKS), glycine 103, 184–192 (KADTIAKNE), glycine 238, and arginine 253 contribute to the GTP site. A G3 motif region spans residues 100–103 (DTVG). Residues 183-186 (AKAD) form a G4 motif region. Positions 320-413 (QETYEAKRNE…LLQSQAQQSG (94 aa)) form a coiled coil. Positions 400–431 (AAAQLLQSQAQQSGAQQTKKDKDKKNPWLCTE) are disordered. Over residues 401-416 (AAQLLQSQAQQSGAQQ) the composition is skewed to low complexity.

Belongs to the TRAFAC class TrmE-Era-EngA-EngB-Septin-like GTPase superfamily. Septin GTPase family. In terms of assembly, septins polymerize into heterooligomeric protein complexes that form filaments, and can associate with cellular membranes, actin filaments and microtubules. Forms homooligomers. GTPase activity is required for filament formation. Interacts with SEPTIN7, SEPTIN9 and SEPTIN12. Expressed in the cerebral cortex (at protein level).

It is found in the cytoplasm. It localises to the cytoskeleton. The protein localises to the synapse. Its subcellular location is the cell projection. The protein resides in the dendritic spine. It is found in the axon. Filament-forming cytoskeletal GTPase. May play a role in cytokinesis (Potential). May play a role in the cytoarchitecture of neurons, including dendritic arborization and dendritic spines, and in GABAergic synaptic connectivity. The sequence is that of Septin-11 from Mus musculus (Mouse).